The sequence spans 394 residues: Putative transporter AraJ (394 aa).

Residues 1–4 (MKKV) are Cytoplasmic-facing. A helical transmembrane segment spans residues 5-27 (ILSLALGTFGLGMAEFGIMGVLT). Residues 28 to 41 (ELAHNVGISIPAAG) are Periplasmic-facing. Residues 42–63 (HMISYYALGVVVGAPIIALFSS) form a helical membrane-spanning segment. At 64-69 (RYSLKH) the chain is on the cytoplasmic side. The chain crosses the membrane as a helical span at residues 70 to 89 (ILLFLVALCVIGNAMFTLSS). Residues 90–93 (SYLM) are Periplasmic-facing. A helical transmembrane segment spans residues 94 to 116 (LAIGRLVSGFPHGAFFGVGAIVL). Topologically, residues 117-128 (SKIIKPGKVTAA) are cytoplasmic. A helical transmembrane segment spans residues 129 to 151 (VAGMVSGMTVANLLGIPLGTYLS). The Periplasmic portion of the chain corresponds to 152–155 (QEFS). A helical membrane pass occupies residues 156–178 (WRYTFLLIAVFNIAVMASVYFWV). Topologically, residues 179-198 (PDIRDEAKGNLREQFHFLRS) are cytoplasmic. A helical membrane pass occupies residues 199 to 221 (PAPWLIFAATMFGNAGVFAWFSY). Residues 222–235 (VKPYMMFISGFSET) lie on the Periplasmic side of the membrane. Residues 236 to 255 (AMTFIMMLVGLGMVLGNMLS) traverse the membrane as a helical segment. The Cytoplasmic segment spans residues 256–261 (GRISGR). The helical transmembrane segment at 262–284 (YSPLRIAAVTDFIIVLALLMLFF) threads the bilayer. Topologically, residues 285–293 (CGGMKTTSL) are periplasmic. The chain crosses the membrane as a helical span at residues 294-316 (IFAFICCAGLFALSAPLQILLLQ). Topologically, residues 317 to 322 (NAKGGE) are cytoplasmic. The chain crosses the membrane as a helical span at residues 323 to 342 (LLGAAGGQIAFNLGSAVGAY). The Periplasmic portion of the chain corresponds to 343 to 351 (CGGMMLTLG). A helical membrane pass occupies residues 352-374 (LAYNYVALPAALLSFAAMSSLLL). Over 375–394 (YGRYKRQQAADTPVLAKPLG) the chain is Cytoplasmic.

The protein belongs to the major facilitator superfamily.

It is found in the cell inner membrane. May be involved in either the transport or processing of arabinose polymers. The chain is Putative transporter AraJ (araJ) from Escherichia coli (strain K12).